Here is a 634-residue protein sequence, read N- to C-terminus: DNA gyrase subunit B (634 aa).

Residues 1–220 (MSYDASAIRV…EEVFLDKGGV (220 aa)) are ATPase domain. A transducer domain region spans residues 221 to 390 (ASFAKALAEG…EAARKARELV (170 aa)). One can recognise a Toprim domain in the interval 416–534 (AELFIVEGDS…RGHVYIAQPP (119 aa)). Mg(2+) is bound by residues glutamate 422, aspartate 499, and aspartate 501.

This sequence belongs to the type II topoisomerase GyrB family. Heterotetramer, composed of two GyrA and two GyrB chains. Non-hydrolyzable ATP analogs induce dimerization, novobiocin also induces a small amount of dimerization. The two subunits form an intertwined dimer where the GyrB ATPase transducer helix of 1 subunit connects to the Toprim domain of the other GyrB subunit through a 10 residue linker. In the heterotetramer, GyrA contains the active site tyrosine that forms a covalent intermediate with the DNA, while GyrB binds cofactors and catalyzes ATP hydrolysis. The cofactor is Mg(2+). Mn(2+) is required as a cofactor. Requires Ca(2+) as cofactor.

It localises to the cytoplasm. The catalysed reaction is ATP-dependent breakage, passage and rejoining of double-stranded DNA.. Functionally, a type II topoisomerase that negatively supercoils closed circular double-stranded (ds) DNA in an ATP-dependent manner. It probably also catalyzes the interconversion of other topological isomers of double-stranded DNA rings, including catenanes. Relaxes negatively supercoiled DNA in an ATP-independent manner. At comparable concentrations T.thermophilus gyrase does not introduce as many negative supercoils into DNA as the E.coli enzyme. Its function is as follows. Negative supercoiling favors strand separation, and DNA replication, transcription, recombination and repair, all of which involve strand separation. Type II topoisomerases break and join 2 DNA strands simultaneously in an ATP-dependent manner. The chain is DNA gyrase subunit B from Thermus thermophilus (strain ATCC 27634 / DSM 579 / HB8).